Consider the following 228-residue polypeptide: uncharacterized protein (228 aa).

The N-terminal stretch at M1–Q16 is a signal peptide. Residues L206–L225 form a helical membrane-spanning segment.

It to A.fulgidus AF_1225.

The protein localises to the membrane. This is an uncharacterized protein from Archaeoglobus fulgidus (strain ATCC 49558 / DSM 4304 / JCM 9628 / NBRC 100126 / VC-16).